We begin with the raw amino-acid sequence, 896 residues long: Bifunctional glutamine synthetase adenylyltransferase/adenylyl-removing enzyme (896 aa).

Residues 1–411 form an adenylyl removase region; it reads MSDNRLDTAR…LFNEILSEPE (411 aa). The segment at 417–896 is adenylyl transferase; that stretch reads NSEWQWAWQE…EVFGEEAATA (480 aa).

It belongs to the GlnE family. Requires Mg(2+) as cofactor.

The enzyme catalyses [glutamine synthetase]-O(4)-(5'-adenylyl)-L-tyrosine + phosphate = [glutamine synthetase]-L-tyrosine + ADP. It catalyses the reaction [glutamine synthetase]-L-tyrosine + ATP = [glutamine synthetase]-O(4)-(5'-adenylyl)-L-tyrosine + diphosphate. Functionally, involved in the regulation of glutamine synthetase GlnA, a key enzyme in the process to assimilate ammonia. When cellular nitrogen levels are high, the C-terminal adenylyl transferase (AT) inactivates GlnA by covalent transfer of an adenylyl group from ATP to specific tyrosine residue of GlnA, thus reducing its activity. Conversely, when nitrogen levels are low, the N-terminal adenylyl removase (AR) activates GlnA by removing the adenylyl group by phosphorolysis, increasing its activity. The regulatory region of GlnE binds the signal transduction protein PII (GlnB) which indicates the nitrogen status of the cell. This is Bifunctional glutamine synthetase adenylyltransferase/adenylyl-removing enzyme from Neisseria meningitidis serogroup A / serotype 4A (strain DSM 15465 / Z2491).